Here is a 679-residue protein sequence, read N- to C-terminus: Glycine--tRNA ligase beta subunit (679 aa).

It belongs to the class-II aminoacyl-tRNA synthetase family. As to quaternary structure, tetramer of two alpha and two beta subunits.

It is found in the cytoplasm. The enzyme catalyses tRNA(Gly) + glycine + ATP = glycyl-tRNA(Gly) + AMP + diphosphate. This chain is Glycine--tRNA ligase beta subunit, found in Streptococcus pyogenes serotype M12 (strain MGAS9429).